The chain runs to 363 residues: Electron transfer flavoprotein subunit alpha, mitochondrial (363 aa).

A mitochondrion-targeting transit peptide spans 1 to 24 (MTRTVLLRALTKNKFVASNAPRSI). 303–331 (LYMAFGVSGAIQHLAGIKDSKVIVAVNKD) provides a ligand contact to FAD.

This sequence belongs to the ETF alpha-subunit/FixB family. As to quaternary structure, heterodimer of an alpha and a beta subunit. FAD is required as a cofactor.

The protein resides in the mitochondrion matrix. The electron transfer flavoprotein serves as a specific electron acceptor for several dehydrogenases, including five acyl-CoA dehydrogenases, glutaryl-CoA and sarcosine dehydrogenase. It transfers the electrons to the main mitochondrial respiratory chain via ETF-ubiquinone oxidoreductase (ETF dehydrogenase). Involved in leucine catabolism and in phytol degradation. The sequence is that of Electron transfer flavoprotein subunit alpha, mitochondrial (ETFA) from Arabidopsis thaliana (Mouse-ear cress).